Consider the following 20-residue polypeptide: Pommaclein (20 aa).

This sequence belongs to the GASA family. In terms of tissue distribution, expressed in pulp (aril) of fruits (at protein level).

This Punica granatum (Pomegranate) protein is Pommaclein.